A 259-amino-acid chain; its full sequence is Diaminopimelate epimerase (259 aa).

Substrate contacts are provided by asparagine 14, glutamine 42, and asparagine 60. Catalysis depends on cysteine 69, which acts as the Proton donor. Residues 70-71, asparagine 151, asparagine 184, and 202-203 each bind substrate; these read GN and ER. The active-site Proton acceptor is cysteine 211. 212–213 serves as a coordination point for substrate; the sequence is GS.

It belongs to the diaminopimelate epimerase family. In terms of assembly, homodimer.

It localises to the cytoplasm. It carries out the reaction (2S,6S)-2,6-diaminopimelate = meso-2,6-diaminopimelate. Its pathway is amino-acid biosynthesis; L-lysine biosynthesis via DAP pathway; DL-2,6-diaminopimelate from LL-2,6-diaminopimelate: step 1/1. Its function is as follows. Catalyzes the stereoinversion of LL-2,6-diaminopimelate (L,L-DAP) to meso-diaminopimelate (meso-DAP), a precursor of L-lysine and an essential component of the bacterial peptidoglycan. The sequence is that of Diaminopimelate epimerase from Wolbachia sp. subsp. Brugia malayi (strain TRS).